Here is a 326-residue protein sequence, read N- to C-terminus: tRNA N6-adenosine threonylcarbamoyltransferase (326 aa).

Fe cation-binding residues include histidine 113 and histidine 117. Substrate contacts are provided by residues 134 to 138, aspartate 167, glycine 180, and asparagine 267; that span reads VASGG. Aspartate 291 lines the Fe cation pocket.

It belongs to the KAE1 / TsaD family. It depends on Fe(2+) as a cofactor.

The protein localises to the cytoplasm. The catalysed reaction is L-threonylcarbamoyladenylate + adenosine(37) in tRNA = N(6)-L-threonylcarbamoyladenosine(37) in tRNA + AMP + H(+). Its function is as follows. Required for the formation of a threonylcarbamoyl group on adenosine at position 37 (t(6)A37) in tRNAs that read codons beginning with adenine. Is involved in the transfer of the threonylcarbamoyl moiety of threonylcarbamoyl-AMP (TC-AMP) to the N6 group of A37, together with TsaE and TsaB. TsaD likely plays a direct catalytic role in this reaction. This chain is tRNA N6-adenosine threonylcarbamoyltransferase, found in Thermus thermophilus (strain ATCC 27634 / DSM 579 / HB8).